The following is a 228-amino-acid chain: 2-C-methyl-D-erythritol 4-phosphate cytidylyltransferase (228 aa).

This sequence belongs to the IspD/TarI cytidylyltransferase family. IspD subfamily.

The enzyme catalyses 2-C-methyl-D-erythritol 4-phosphate + CTP + H(+) = 4-CDP-2-C-methyl-D-erythritol + diphosphate. It functions in the pathway isoprenoid biosynthesis; isopentenyl diphosphate biosynthesis via DXP pathway; isopentenyl diphosphate from 1-deoxy-D-xylulose 5-phosphate: step 2/6. Its function is as follows. Catalyzes the formation of 4-diphosphocytidyl-2-C-methyl-D-erythritol from CTP and 2-C-methyl-D-erythritol 4-phosphate (MEP). This chain is 2-C-methyl-D-erythritol 4-phosphate cytidylyltransferase, found in Mannheimia succiniciproducens (strain KCTC 0769BP / MBEL55E).